A 164-amino-acid polypeptide reads, in one-letter code: MADS-box transcription factor 51 (164 aa).

The region spanning 2–62 (ARRGRVQLRR…GKLYEYSSSS (61 aa)) is the MADS-box domain. The tract at residues 133–164 (TKSKKMLAKQNGEGSRSRANSSGSRGQEEGSA) is disordered.

Widely expressed.

It is found in the nucleus. Its function is as follows. Probable transcription factor involved in the regulation of flowering time under short day (SD) conditions. Functions as a promoter of flowering under SD conditions, upstream of EHD1, HD3A and MADS14, but downstream of GIGANTEA (GI). May transmit a SD promotion signal from GI to EHD1. Functions independently of MADS50 to control flowering time. The polypeptide is MADS-box transcription factor 51 (Oryza sativa subsp. japonica (Rice)).